A 127-amino-acid chain; its full sequence is Ribosome-binding factor A (127 aa).

The protein belongs to the RbfA family. Monomer. Binds 30S ribosomal subunits, but not 50S ribosomal subunits or 70S ribosomes.

The protein resides in the cytoplasm. In terms of biological role, one of several proteins that assist in the late maturation steps of the functional core of the 30S ribosomal subunit. Associates with free 30S ribosomal subunits (but not with 30S subunits that are part of 70S ribosomes or polysomes). Required for efficient processing of 16S rRNA. May interact with the 5'-terminal helix region of 16S rRNA. In Glaesserella parasuis serovar 5 (strain SH0165) (Haemophilus parasuis), this protein is Ribosome-binding factor A.